The sequence spans 491 residues: MNTQQLAKLRSIVPEMRRVRHIHFVGIGGAGMGGIAEVLANEGYQISGSDLAPNPVTQQLTSLGATIFFNHRPENVRDASVVVVSSAISADNPEIVAAHEARIPVIRRAEMLAELMRFRHGIAIAGTHGKTTTTAMVSSIYAEAGLDPTFVNGGLVKAAGVHARLGHSRYLIAEADESDASFLHLQPMVAIVTNIEADHMDTYHGDFENLKQTFINFLHNLPFYGRAVMCVDDPVIRELLPRVGRQTTTYGFSEDADVRVEDYQQIGPQGHFTLLRQGMPDLHVTLNAPGRHNALNAAAAVAVATEEGIDDDAILRALESFQGTGRRFDFLGEFPLEPVNGKAGTAMLVDDYGHHPTEVDATIKAARAGWPDKNLVMLFQPHRYTRTRDLYDDFANVLTQVDALLMLDVYPAGEAPTPGADSRSLCRTIRNRGKIDPILVSDPAQVATMLAPVLTGNDLILVQGAGNVGKIARYLSEIKLKPQIQEEEQHG.

Residue 126–132 (GTHGKTT) participates in ATP binding.

It belongs to the MurCDEF family.

The protein localises to the cytoplasm. The catalysed reaction is UDP-N-acetyl-alpha-D-muramate + L-alanine + ATP = UDP-N-acetyl-alpha-D-muramoyl-L-alanine + ADP + phosphate + H(+). Its pathway is cell wall biogenesis; peptidoglycan biosynthesis. In terms of biological role, cell wall formation. The polypeptide is UDP-N-acetylmuramate--L-alanine ligase (Salmonella gallinarum (strain 287/91 / NCTC 13346)).